Here is a 637-residue protein sequence, read N- to C-terminus: Penicillin-binding protein 1A (637 aa).

The interval 62–224 (LIADLGSERR…NQYDPYSHPE (163 aa)) is transglycosylase. The active-site Proton donor; for transglycosylase activity is the Glu-91. The transpeptidase stretch occupies residues 298 to 612 (EVYTNVDSKV…RLTPIVGDGF (315 aa)). Ser-371 acts as the Acyl-ester intermediate; for transpeptidase activity in catalysis.

In the N-terminal section; belongs to the glycosyltransferase 51 family. The protein in the C-terminal section; belongs to the transpeptidase family.

Its subcellular location is the secreted. The enzyme catalyses [GlcNAc-(1-&gt;4)-Mur2Ac(oyl-L-Ala-gamma-D-Glu-L-Lys-D-Ala-D-Ala)](n)-di-trans,octa-cis-undecaprenyl diphosphate + beta-D-GlcNAc-(1-&gt;4)-Mur2Ac(oyl-L-Ala-gamma-D-Glu-L-Lys-D-Ala-D-Ala)-di-trans,octa-cis-undecaprenyl diphosphate = [GlcNAc-(1-&gt;4)-Mur2Ac(oyl-L-Ala-gamma-D-Glu-L-Lys-D-Ala-D-Ala)](n+1)-di-trans,octa-cis-undecaprenyl diphosphate + di-trans,octa-cis-undecaprenyl diphosphate + H(+). The catalysed reaction is Preferential cleavage: (Ac)2-L-Lys-D-Ala-|-D-Ala. Also transpeptidation of peptidyl-alanyl moieties that are N-acyl substituents of D-alanine.. Its pathway is cell wall biogenesis; peptidoglycan biosynthesis. Functionally, cell wall formation. The polypeptide is Penicillin-binding protein 1A (ponA) (Streptococcus oralis).